Consider the following 58-residue polypeptide: Enterocin-HF (58 aa).

A propeptide spanning residues 1-15 (MEKLTVKEMSQVVGG) is cleaved from the precursor. Residues cysteine 24 and cysteine 29 are joined by a disulfide bond.

It localises to the secreted. Bacteriocin. This Enterococcus faecium (Streptococcus faecium) protein is Enterocin-HF (entHF).